An 854-amino-acid chain; its full sequence is Periodic tryptophan protein 2 homolog (854 aa).

WD repeat units follow at residues 9–52, 53–93, 94–132, 144–183, 188–227, 252–291, 294–334, 337–376, 379–418, 422–464, 465–504, 507–546, and 569–608; these read NLVG…TFPF, ENHK…LHYF, NFKS…EERE, GHFD…GFHP, GHKN…QAGE, NQNS…MLYQ, ITQS…YVLK, SHYD…CIVT, QHTS…NFRT, PSRV…ETLA, GHEG…GIVE, PIPS…QTSL, and SLNK…LIKK. Threonine 640 is subject to Phosphothreonine. Serine 645 bears the Phosphoserine mark. A WD 14 repeat occupies 668-709; the sequence is TRPEIICHGVQFSPSGGAFAAATTEGLMIYSLYNDFLFDPIN.

The protein belongs to the WD repeat PWP2 family.

The polypeptide is Periodic tryptophan protein 2 homolog (Schizosaccharomyces pombe (strain 972 / ATCC 24843) (Fission yeast)).